Here is a 142-residue protein sequence, read N- to C-terminus: Large ribosomal subunit protein bL17 (142 aa).

The protein belongs to the bacterial ribosomal protein bL17 family. As to quaternary structure, part of the 50S ribosomal subunit. Contacts protein L32.

The chain is Large ribosomal subunit protein bL17 from Wolbachia sp. subsp. Brugia malayi (strain TRS).